Reading from the N-terminus, the 722-residue chain is MFNKHSVEIDWGGRPLRLETGKVARQADGAVVATYGETVVLATVVAAKTPREGVDFLPLTVDYQEKTYAAGRIPGGYFKREGRPTEKETLVSRLIDRPIRPLFADGWRNETQVIVTVLSHDMENDPDILALVASSAALTLSGAPFKGPIGAARVGFINDEYVLNPVLDEMPETQLDLVVAGTSDAVLMVESEAKELSEEIMLGAVMFGHRHFQPVIDAIIALAEKAAKEPRELTVIDDSAIEKEMLGLVEQELRAAYAIAVKQERYAAVGKVKEKAIAHFFPEGQEPKYDKLRIAGVFKELEAKIVRWNILDTGKRIDGRDSKTVRSIIAEAGVLPRAHGSALFTRGETQALVVTTLGTGEDEQYVDSLAGTYKETFLLHYNFPPYSVGETGRLGGTKRREIGHGKLAWRAIRPVLPPHHEFPYTIRVVSEITESNGSSSMASVCGASLALMDAGVPLKRPTAGIAMGLILEGERFAVLSDILGDEDHLGDMDFKVAGTEQGVTSLQMDIKIAGITEEIMKVALGQAKDGRIHILGEMSKALDRARAELGEHAPRIETFKIPTDKIREVIGTGGKVIREIVEKTGAKVNIEDDGTVKVASSDGESIKAAIKWIKSIASDPEVGEIYEGTVVKVMEFGAFVNFFGAKDGLVHISQLAAGRVQKTSDVVKEGDKVKVKLLGFDDRGKTRLSMKVVDQDTGEDLEAKQKAEAKAEDEAPAQAAGE.

2 residues coordinate Mg(2+): D487 and D493. In terms of domain architecture, KH spans 554 to 613 (PRIETFKIPTDKIREVIGTGGKVIREIVEKTGAKVNIEDDGTVKVASSDGESIKAAIKWI). Residues 623 to 691 (GEIYEGTVVK…DRGKTRLSMK (69 aa)) form the S1 motif domain. The interval 691–722 (KVVDQDTGEDLEAKQKAEAKAEDEAPAQAAGE) is disordered. Over residues 701–713 (LEAKQKAEAKAED) the composition is skewed to basic and acidic residues.

It belongs to the polyribonucleotide nucleotidyltransferase family. Mg(2+) serves as cofactor.

The protein resides in the cytoplasm. The enzyme catalyses RNA(n+1) + phosphate = RNA(n) + a ribonucleoside 5'-diphosphate. Its function is as follows. Involved in mRNA degradation. Catalyzes the phosphorolysis of single-stranded polyribonucleotides processively in the 3'- to 5'-direction. The sequence is that of Polyribonucleotide nucleotidyltransferase from Rhodopseudomonas palustris (strain BisB5).